A 220-amino-acid polypeptide reads, in one-letter code: Guanylate kinase (220 aa).

Residues 15-194 (GLMLVISSPS…AFEGIEAIVK (180 aa)) form the Guanylate kinase-like domain. An ATP-binding site is contributed by 22 to 29 (SPSGAGKS).

Belongs to the guanylate kinase family.

It is found in the cytoplasm. The catalysed reaction is GMP + ATP = GDP + ADP. Functionally, essential for recycling GMP and indirectly, cGMP. This Agrobacterium fabrum (strain C58 / ATCC 33970) (Agrobacterium tumefaciens (strain C58)) protein is Guanylate kinase.